We begin with the raw amino-acid sequence, 561 residues long: MNINVADLLNGNYILLLFVVLALGLCLGKLRLGSVQLGNSIGVLVVSLLLGQQHFAINTDALNLGFMLFIFCVGVEAGPNFFSIFFRDGKNYLMLALVMVGSAMLIATVLGKVFGWDIGLTAGMLAGAMTSTPVLVGAGDTLRHFGLPSDQLAQSLDHLSLGYALTYLVGLVSLIVGARYMPKLQHQDLQTSAQQIARERGLDTDSKRKVYLPVIRAYRVGPELVAWADGKNLRELGIYRQTGCYIERIRRNGILANPDGDAVLQMGDDIALVGYPDAHARLDPSFRNGKEVFDRDLLDMRIVTEEIVVKNHNAVGRRLAQLKLTDHGCFLNRVIRSQIEMPIDDNVVLNKGDVLQVSGDARRVKTVADRIGFISIHSQVTDLLAFCAFFIVGLMIGMITFQFSSFSFGIGNAAGLLFAGIMLGFLRANHPTFGYIPQGALNMVKEFGLMVFMAGVGLSAGAGINNGLGAVGGQMLAAGLIVSLLPVVICFLFGAYVLRMNRAMLFGAMMGARTCAPAMEIISDTARSNIPALGYAGTYAIANVLLTLAGTLIVIIWPGLQ.

5 helical membrane-spanning segments follow: residues 8-28, 37-57, 66-86, 94-114, and 158-178; these read LLNG…LCLG, LGNS…HFAI, FMLF…SIFF, MLAL…GKVF, and HLSL…IVGA. 2 consecutive RCK C-terminal domains span residues 202-288 and 292-373; these read LDTD…SFRN and VFDR…RIGF. The next 5 membrane-spanning stretches (helical) occupy residues 383–403, 406–426, 447–467, 478–498, and 540–560; these read LLAF…TFQF, FSFG…LGFL, FGLM…INNG, AGLI…AYVL, and AIAN…WPGL.

The protein belongs to the AAE transporter (TC 2.A.81) family. YbjL subfamily.

Its subcellular location is the cell membrane. The protein is Putative transport protein KPK_3686 of Klebsiella pneumoniae (strain 342).